Here is an 812-residue protein sequence, read N- to C-terminus: MNRTLTDPMVSSFREDDPRPPVPGEEGETTCHHPSKLAMMRPKDPVKTIMADLRCSTARRDEDGLGEPEGSASPDSPLARWTKSLHFLLGDQDGAQLFRAYLEREKCVDTLDFWFACNGFRQMDLKDTKTHRVAKAIYKRYIENNSIVAKQLKPATKTFIRDNIKRQQIDSAMFDQAQMEIQTAMEENAYQMFLTSDIYLEYVRTGCENPSHVNPNGLGGLKLVCGYLPTLNEEEEWSCNDFKAKALATVVGLSAKTLRSPPLRAVEALEKGYRSYRRSDPGNPNRFTSGYSFAPATSANDSEVSSDALTDDSMSMTDSSVDAIPPYKLGSKKQLQREMQRNMRMNGQVSLPPFPRTRRPPKEMTPVEPAAFAAQLIARLERLKREQETMSSLEERLQQIQEEEERDESEMSSSSASHSLPLLPPGTCEEDPQAILDEHLSRVLKTPGCQSPGLLRHSPRSRSPEQRPLPRGGLSTRSQSSSMNGYVPAKTFISRQSTKHIHHHYIHHHAGPKSKEQIEVEATQRVQCLCHGTSECCTAPYIRSRSLGRDQCASPAEVALGHSSTLSKRLCKSGEEVNMEGLENSLLQLPADSTDRSQNVWQWILESDRQTKHKPHSTQNVKKSHSLEPTRTHTWGGGGSSGHLRAHQPAHPFVQDPAMPPLPPPNTLAQLEEARRRLEEVSKPSKQRHSTSSLQRDKSHPVPVQNGSSAFPMDERKDPKKMSGCHSSLGSETVVTYFFCGEEIPYRRMMKTHSLTLGHFKEQLRKKGNYRYFFKRASDEFECGAVFEEVWDDCTVLPMYEGKILGKVDRMD.

Residues 1-43 are disordered; the sequence is MNRTLTDPMVSSFREDDPRPPVPGEEGETTCHHPSKLAMMRPK. Residues 84 to 203 form the RGS domain; sequence SLHFLLGDQD…LTSDIYLEYV (120 aa). Disordered stretches follow at residues 275 to 326, 388 to 430, 446 to 484, and 609 to 726; these read SYRR…AIPP, ETMS…TCEE, TPGC…SSMN, and RQTK…SGCH. Positions 285–303 are enriched in polar residues; the sequence is NRFTSGYSFAPATSANDSE. Positions 305–323 are enriched in low complexity; sequence SSDALTDDSMSMTDSSVDA. An interaction with GSK3B region spans residues 329 to 415; the sequence is LGSKKQLQRE…RDESEMSSSS (87 aa). Positions 388 to 397 are enriched in basic and acidic residues; sequence ETMSSLEERL. Over residues 401-410 the composition is skewed to acidic residues; sequence QEEEERDESE. The span at 411–421 shows a compositional bias: low complexity; it reads MSSSSASHSLP. An interaction with beta-catenin region spans residues 415–467; that stretch reads SASHSLPLLPPGTCEEDPQAILDEHLSRVLKTPGCQSPGLLRHSPRSRSPEQR. Positions 475–484 are enriched in polar residues; that stretch reads STRSQSSSMN. A compositionally biased stretch (basic and acidic residues) spans 672–683; it reads EEARRRLEEVSK. A DIX domain is found at 730-812; the sequence is GSETVVTYFF…KILGKVDRMD (83 aa).

As to quaternary structure, interacts with hwa; leading to promote the tankyrase-mediated degradation of axin1. ADP-ribosylated by tankyrase tnks and tnks2. Poly-ADP-ribosylated protein is recognized by rnf146, followed by ubiquitination and subsequent activation of the Wnt signaling pathway. In terms of processing, ubiquitinated by rnf146 when poly-ADP-ribosylated, leading to its degradation and subsequent activation of the Wnt signaling pathway.

The protein resides in the cytoplasm. Its function is as follows. Component of the beta-catenin destruction complex required for regulating ctnnb1 levels through phosphorylation and ubiquitination, and modulating Wnt-signaling. Controls dorsoventral patterning by down-regulating ctnnb1 to inhibit the Wnt signaling pathway and ventralize embryos. This Danio rerio (Zebrafish) protein is Axin-2 (axin2).